The primary structure comprises 370 residues: 4-hydroxy-3-methylbut-2-en-1-yl diphosphate synthase (flavodoxin) (370 aa).

4 residues coordinate [4Fe-4S] cluster: Cys270, Cys273, Cys305, and Glu312.

The protein belongs to the IspG family. [4Fe-4S] cluster serves as cofactor.

It carries out the reaction (2E)-4-hydroxy-3-methylbut-2-enyl diphosphate + oxidized [flavodoxin] + H2O + 2 H(+) = 2-C-methyl-D-erythritol 2,4-cyclic diphosphate + reduced [flavodoxin]. Its pathway is isoprenoid biosynthesis; isopentenyl diphosphate biosynthesis via DXP pathway; isopentenyl diphosphate from 1-deoxy-D-xylulose 5-phosphate: step 5/6. In terms of biological role, converts 2C-methyl-D-erythritol 2,4-cyclodiphosphate (ME-2,4cPP) into 1-hydroxy-2-methyl-2-(E)-butenyl 4-diphosphate. The polypeptide is 4-hydroxy-3-methylbut-2-en-1-yl diphosphate synthase (flavodoxin) (Ectopseudomonas mendocina (strain ymp) (Pseudomonas mendocina)).